The following is a 342-amino-acid chain: Phosphoribosylformylglycinamidine cyclo-ligase (342 aa).

It belongs to the AIR synthase family.

It localises to the cytoplasm. It carries out the reaction 2-formamido-N(1)-(5-O-phospho-beta-D-ribosyl)acetamidine + ATP = 5-amino-1-(5-phospho-beta-D-ribosyl)imidazole + ADP + phosphate + H(+). Its pathway is purine metabolism; IMP biosynthesis via de novo pathway; 5-amino-1-(5-phospho-D-ribosyl)imidazole from N(2)-formyl-N(1)-(5-phospho-D-ribosyl)glycinamide: step 2/2. The protein is Phosphoribosylformylglycinamidine cyclo-ligase of Staphylococcus aureus (strain MRSA252).